A 329-amino-acid chain; its full sequence is GTP 3',8-cyclase (329 aa).

Residues 8 to 234 (AFARKFYYLR…QLRQRSDGPA (227 aa)) form the Radical SAM core domain. Arginine 17 contacts GTP. Residues cysteine 24 and cysteine 28 each contribute to the [4Fe-4S] cluster site. Residue tyrosine 30 coordinates S-adenosyl-L-methionine. Position 31 (cysteine 31) interacts with [4Fe-4S] cluster. Arginine 68 contributes to the GTP binding site. Glycine 72 serves as a coordination point for S-adenosyl-L-methionine. GTP is bound at residue threonine 99. Position 123 (serine 123) interacts with S-adenosyl-L-methionine. Residue lysine 160 coordinates GTP. Methionine 194 contacts S-adenosyl-L-methionine. [4Fe-4S] cluster is bound by residues cysteine 257 and cysteine 260. 262–264 (RLR) contributes to the GTP binding site. [4Fe-4S] cluster is bound at residue cysteine 274.

Belongs to the radical SAM superfamily. MoaA family. As to quaternary structure, monomer and homodimer. It depends on [4Fe-4S] cluster as a cofactor.

The catalysed reaction is GTP + AH2 + S-adenosyl-L-methionine = (8S)-3',8-cyclo-7,8-dihydroguanosine 5'-triphosphate + 5'-deoxyadenosine + L-methionine + A + H(+). It functions in the pathway cofactor biosynthesis; molybdopterin biosynthesis. Catalyzes the cyclization of GTP to (8S)-3',8-cyclo-7,8-dihydroguanosine 5'-triphosphate. This is GTP 3',8-cyclase from Salmonella newport (strain SL254).